The primary structure comprises 308 residues: Ectoine dioxygenase (308 aa).

Gln131 contacts L-ectoine. 2-oxoglutarate is bound at residue Lys137. 3 residues coordinate Fe cation: His148, Asp150, and His249.

It belongs to the PhyH family. EctD subfamily. As to quaternary structure, homodimer. Fe(2+) serves as cofactor.

It catalyses the reaction L-ectoine + 2-oxoglutarate + O2 = 5-hydroxyectoine + succinate + CO2. Functionally, involved in the biosynthesis of 5-hydroxyectoine, called compatible solute, which helps organisms to survive extreme osmotic stress by acting as a highly soluble organic osmolyte. Catalyzes the 2-oxoglutarate-dependent selective hydroxylation of L-ectoine to yield (4S,5S)-5-hydroxyectoine. The polypeptide is Ectoine dioxygenase (Bordetella parapertussis (strain 12822 / ATCC BAA-587 / NCTC 13253)).